A 141-amino-acid chain; its full sequence is MADKKVVGVIKLQIQAGAANPAPPVGPALGQHGVNIMEFCKAYNAATESQKGNVIPVEISVYEDRSFTFVLKTPPVVELIKKAARISKGSPTPHNLKVAQITPEQVKSIAEAKMVDLNANDIDAASKIVRGTARSMGVTVA.

The protein belongs to the universal ribosomal protein uL11 family. In terms of assembly, part of the ribosomal stalk of the 50S ribosomal subunit. Interacts with L10 and the large rRNA to form the base of the stalk. L10 forms an elongated spine to which L12 dimers bind in a sequential fashion forming a multimeric L10(L12)X complex. In terms of processing, one or more lysine residues are methylated.

Functionally, forms part of the ribosomal stalk which helps the ribosome interact with GTP-bound translation factors. The chain is Large ribosomal subunit protein uL11 from Tropheryma whipplei (strain TW08/27) (Whipple's bacillus).